The chain runs to 226 residues: Eukaryotic translation initiation factor 3 subunit K (226 aa).

The PCI domain maps to Y44–H202.

Belongs to the eIF-3 subunit K family. As to quaternary structure, component of the eukaryotic translation initiation factor 3 (eIF-3) complex.

It localises to the cytoplasm. In terms of biological role, component of the eukaryotic translation initiation factor 3 (eIF-3) complex, which is involved in protein synthesis of a specialized repertoire of mRNAs and, together with other initiation factors, stimulates binding of mRNA and methionyl-tRNAi to the 40S ribosome. The eIF-3 complex specifically targets and initiates translation of a subset of mRNAs involved in cell proliferation. In Arabidopsis thaliana (Mouse-ear cress), this protein is Eukaryotic translation initiation factor 3 subunit K (TIF3K1).